Here is a 253-residue protein sequence, read N- to C-terminus: Triosephosphate isomerase (253 aa).

Position 9–11 (9–11) interacts with substrate; sequence NWK. His-95 serves as the catalytic Electrophile. Glu-167 (proton acceptor) is an active-site residue. Substrate-binding positions include Gly-173, Ser-213, and 234 to 235; that span reads GG. Ser-213 is subject to Phosphoserine.

This sequence belongs to the triosephosphate isomerase family. In terms of assembly, homodimer.

It is found in the cytoplasm. It catalyses the reaction D-glyceraldehyde 3-phosphate = dihydroxyacetone phosphate. It participates in carbohydrate biosynthesis; gluconeogenesis. It functions in the pathway carbohydrate degradation; glycolysis; D-glyceraldehyde 3-phosphate from glycerone phosphate: step 1/1. Functionally, involved in the gluconeogenesis. Catalyzes stereospecifically the conversion of dihydroxyacetone phosphate (DHAP) to D-glyceraldehyde-3-phosphate (G3P). The chain is Triosephosphate isomerase from Geobacillus kaustophilus (strain HTA426).